Reading from the N-terminus, the 131-residue chain is 1,4-dihydroxy-2-naphthoyl-CoA hydrolase (131 aa).

The active site involves D7.

Belongs to the 4-hydroxybenzoyl-CoA thioesterase family. DHNA-CoA hydrolase subfamily.

The catalysed reaction is 1,4-dihydroxy-2-naphthoyl-CoA + H2O = 1,4-dihydroxy-2-naphthoate + CoA + H(+). It participates in cofactor biosynthesis; phylloquinone biosynthesis. The protein operates within quinol/quinone metabolism; 1,4-dihydroxy-2-naphthoate biosynthesis; 1,4-dihydroxy-2-naphthoate from chorismate: step 7/7. Catalyzes the hydrolysis of 1,4-dihydroxy-2-naphthoyl-CoA (DHNA-CoA) to 1,4-dihydroxy-2-naphthoate (DHNA), a reaction involved in phylloquinone (vitamin K1) biosynthesis. The chain is 1,4-dihydroxy-2-naphthoyl-CoA hydrolase from Synechococcus sp. (strain RCC307).